The chain runs to 34 residues: Potassium channel toxin alpha-KTx 6.13 (34 aa).

Cystine bridges form between Cys-3/Cys-24, Cys-9/Cys-29, Cys-13/Cys-31, and Cys-19/Cys-34. Cys-34 is subject to Cysteine amide.

It belongs to the short scorpion toxin superfamily. Potassium channel inhibitor family. Alpha-KTx 06 subfamily. In terms of tissue distribution, expressed by the venom gland.

It localises to the secreted. Functionally, antagonist of Kv1/KCNA potassium channels. Shows a weak interaction with muscle-type nicotinic acetylcholine receptors (nAChR), since it inhibits alpha-bungarotoxin binding to both muscle-type nAChR from T.californica (IC(50)=490 nM). This suggests it probably weakly inhibits nAChR. The protein is Potassium channel toxin alpha-KTx 6.13 of Heterometrus spinifer (Asia giant forest scorpion).